Here is a 44-residue protein sequence, read N- to C-terminus: MRNIKTYLSTVPVLTTLWFGSLAGLLIEINRLFPDALLFPFFSF.

The chain crosses the membrane as a helical span at residues 7–27; the sequence is YLSTVPVLTTLWFGSLAGLLI.

It belongs to the PsaJ family.

The protein resides in the plastid. Its subcellular location is the chloroplast thylakoid membrane. In terms of biological role, may help in the organization of the PsaE and PsaF subunits. The protein is Photosystem I reaction center subunit IX of Dioscorea elephantipes (Elephant's foot yam).